Reading from the N-terminus, the 720-residue chain is MEPVETWTPGKVATWLRGLDDSLQDYPFEDWQLPGKNLLQLCPQSLEALAVRSLGHQELILGGVEQLQALSSRLQTENLQSLTEGLLGATHDFQSIVQGCLGDCAKTPIDVLCAAVELLHEADALLFWLSRYLFSHLNDFSACQEIRDLLEELSQVLHEDGPAAEKEGTVLRICSHVAGICHNILVCCPKELLEQKAVLEQVQLDSPLGLEIHTTSNCQHFVSQVDTQVPTDSRLQIQPGDEVVQINEQVVVREERDMVGWPRKNMVRELLREPAGLSLVLKKIPIPETPPQTPPQVLDSPHQRSPSLSLAPLSPRAPSEDVFAFDLSSNPSPGPSPAWTDSASLGPEPLPIPPEPPAILPAGVAGTPGLPESPDKSPVGRKKSKGLATRLSRRRVSCRELGRPDCDGWLLLRKAPGGFMGPRWRRRWFVLKGHTLYWYRQPQDEKAEGLINVSNYSLESGHDQKKKYVFQLTHDVYKPFIFAADTLTDLSMWVRHLITCISKYQSPGRAPPPREEDCYSETEAEDPDDEAGSHSASPSPAQAGSPLHGDTSPAATPTQRSPRTSFGSLTDSSEEALEGMVRGLRQGGVSLLGQPQPLTQEQWRSSFMRRNRDPQLNERVHRVRALQSTLKAKLQELQVLEEVLGDPELTGEKFRQWKEQNRELYSEGLGAWGVAQAEGSSHILTSDSTEQSPHSLPSDPEEHSHLCPLTSESSLRPPDL.

The SAM domain occupies 7 to 70 (WTPGKVATWL…LGGVEQLQAL (64 aa)). In terms of domain architecture, CRIC spans 78 to 164 (NLQSLTEGLL…QVLHEDGPAA (87 aa)). The region spanning 196–285 (KAVLEQVQLD…GLSLVLKKIP (90 aa)) is the PDZ domain. The disordered stretch occupies residues 285 to 390 (PIPETPPQTP…RKKSKGLATR (106 aa)). Residues 304-317 (RSPSLSLAPLSPRA) are compositionally biased toward low complexity. A phosphoserine mark is found at Ser-307 and Ser-314. Residues 348–359 (EPLPIPPEPPAI) show a composition bias toward pro residues. Residues 379–390 (VGRKKSKGLATR) are compositionally biased toward basic residues. Residues 403–502 (RPDCDGWLLL…WVRHLITCIS (100 aa)) enclose the PH domain. Residues 504 to 573 (YQSPGRAPPP…TSFGSLTDSS (70 aa)) form a disordered region. Over residues 518 to 530 (CYSETEAEDPDDE) the composition is skewed to acidic residues. Residues 533-546 (SHSASPSPAQAGSP) show a composition bias toward low complexity. Over residues 553-571 (PAATPTQRSPRTSFGSLTD) the composition is skewed to polar residues. The stretch at 615–646 (QLNERVHRVRALQSTLKAKLQELQVLEEVLGD) forms a coiled coil. The interval 676-720 (QAEGSSHILTSDSTEQSPHSLPSDPEEHSHLCPLTSESSLRPPDL) is disordered. The span at 678-695 (EGSSHILTSDSTEQSPHS) shows a compositional bias: polar residues.

It belongs to the CNKSR family. Interacts with RHO and RALGDS. In terms of processing, phosphorylated on tyrosine.

It is found in the cytoplasm. It localises to the membrane. In terms of biological role, may function as an adapter protein or regulator of Ras signaling pathways. The chain is Connector enhancer of kinase suppressor of ras 1 (CNKSR1) from Homo sapiens (Human).